Here is a 326-residue protein sequence, read N- to C-terminus: Structural protein ORF326a (326 aa).

Positions 1–28 (MSTTFRGKKEEEEEEEEEKEEKEEELFN) are disordered. A compositionally biased stretch (acidic residues) spans 11 to 26 (EEEEEEEEKEEKEEEL).

It is found in the virion. In Acidianus two-tailed virus (ATV), this protein is Structural protein ORF326a.